A 575-amino-acid polypeptide reads, in one-letter code: Lysine--tRNA ligase (575 aa).

Residues Glu-412 and Glu-419 each contribute to the Mg(2+) site.

The protein belongs to the class-II aminoacyl-tRNA synthetase family. Homodimer. It depends on Mg(2+) as a cofactor.

The protein localises to the cytoplasm. The catalysed reaction is tRNA(Lys) + L-lysine + ATP = L-lysyl-tRNA(Lys) + AMP + diphosphate. In Bacteroides fragilis (strain ATCC 25285 / DSM 2151 / CCUG 4856 / JCM 11019 / LMG 10263 / NCTC 9343 / Onslow / VPI 2553 / EN-2), this protein is Lysine--tRNA ligase.